A 265-amino-acid chain; its full sequence is Sulfur carrier protein FdhD (265 aa).

The Cysteine persulfide intermediate role is filled by cysteine 107.

This sequence belongs to the FdhD family.

The protein localises to the cytoplasm. Its function is as follows. Required for formate dehydrogenase (FDH) activity. Acts as a sulfur carrier protein that transfers sulfur from IscS to the molybdenum cofactor prior to its insertion into FDH. The protein is Sulfur carrier protein FdhD of Staphylococcus aureus (strain bovine RF122 / ET3-1).